The primary structure comprises 200 residues: UPF0329 protein ECU06_1670 (200 aa).

Belongs to the UPF0329 family.

This Encephalitozoon cuniculi (strain GB-M1) (Microsporidian parasite) protein is UPF0329 protein ECU06_1670.